A 215-amino-acid chain; its full sequence is Pyridoxine/pyridoxamine 5'-phosphate oxidase (215 aa).

Substrate is bound by residues 8-11 and Lys66; that span reads RQEY. Residues 61 to 66, 76 to 77, Arg82, Lys83, and Gln105 each bind FMN; these read RIVLLK and YT. Residues Tyr123 and Arg127 each contribute to the substrate site. Residues 140 to 141 and Trp186 each bind FMN; that span reads QS. 192–194 lines the substrate pocket; it reads RLH. Residue Arg196 participates in FMN binding.

Belongs to the pyridoxamine 5'-phosphate oxidase family. As to quaternary structure, homodimer. It depends on FMN as a cofactor.

The enzyme catalyses pyridoxamine 5'-phosphate + O2 + H2O = pyridoxal 5'-phosphate + H2O2 + NH4(+). It catalyses the reaction pyridoxine 5'-phosphate + O2 = pyridoxal 5'-phosphate + H2O2. It participates in cofactor metabolism; pyridoxal 5'-phosphate salvage; pyridoxal 5'-phosphate from pyridoxamine 5'-phosphate: step 1/1. The protein operates within cofactor metabolism; pyridoxal 5'-phosphate salvage; pyridoxal 5'-phosphate from pyridoxine 5'-phosphate: step 1/1. Catalyzes the oxidation of either pyridoxine 5'-phosphate (PNP) or pyridoxamine 5'-phosphate (PMP) into pyridoxal 5'-phosphate (PLP). This is Pyridoxine/pyridoxamine 5'-phosphate oxidase from Salinibacter ruber (strain DSM 13855 / M31).